The sequence spans 506 residues: Cysteine--tRNA ligase (506 aa).

Cysteine 43 contributes to the Zn(2+) binding site. The short motif at 45 to 55 (VTVYDLCHLGH) is the 'HIGH' region element. Residues cysteine 237, histidine 262, and glutamate 266 each coordinate Zn(2+). Positions 294 to 298 (KMSKS) match the 'KMSKS' region motif. Lysine 297 serves as a coordination point for ATP.

It belongs to the class-I aminoacyl-tRNA synthetase family. In terms of assembly, monomer. Zn(2+) serves as cofactor.

The protein resides in the cytoplasm. It carries out the reaction tRNA(Cys) + L-cysteine + ATP = L-cysteinyl-tRNA(Cys) + AMP + diphosphate. The sequence is that of Cysteine--tRNA ligase from Synechococcus sp. (strain JA-3-3Ab) (Cyanobacteria bacterium Yellowstone A-Prime).